A 209-amino-acid chain; its full sequence is Octanoyltransferase (209 aa).

Residues 30–209 (GEAPEAVYLV…LEVEFIKIFK (180 aa)) form the BPL/LPL catalytic domain. Substrate contacts are provided by residues 69–76 (RGGKFTFH), 143–145 (AIG), and 156–158 (GIA). Residue C174 is the Acyl-thioester intermediate of the active site.

This sequence belongs to the LipB family.

It is found in the cytoplasm. The enzyme catalyses octanoyl-[ACP] + L-lysyl-[protein] = N(6)-octanoyl-L-lysyl-[protein] + holo-[ACP] + H(+). The protein operates within protein modification; protein lipoylation via endogenous pathway; protein N(6)-(lipoyl)lysine from octanoyl-[acyl-carrier-protein]: step 1/2. Catalyzes the transfer of endogenously produced octanoic acid from octanoyl-acyl-carrier-protein onto the lipoyl domains of lipoate-dependent enzymes. Lipoyl-ACP can also act as a substrate although octanoyl-ACP is likely to be the physiological substrate. This is Octanoyltransferase from Rickettsia bellii (strain OSU 85-389).